The sequence spans 407 residues: Putative metabolite transport protein HI_1104 (407 aa).

Residues 1 to 16 lie on the Cytoplasmic side of the membrane; sequence MTNKVNSYGWKALIGS. The helical transmembrane segment at 17–37 threads the bilayer; it reads AVGYGMDGFDLLILGFMLSAI. At 38-48 the chain is on the periplasmic side; it reads SADLNLTPAQG. A helical membrane pass occupies residues 49–69; sequence GSLVTWTLIGAVFGGILFGAL. Topologically, residues 70–77 are cytoplasmic; that stretch reads SDKYGRVR. Residues 78 to 98 form a helical membrane-spanning segment; that stretch reads VLTWTILLFAVFTGLCAIAQG. The Periplasmic segment spans residues 99-107; that stretch reads YWDLLIYRT. A helical transmembrane segment spans residues 108 to 128; the sequence is IAGIGLGGEFGIGMALAAEAW. Residues 129 to 138 lie on the Cytoplasmic side of the membrane; sequence PARHRAKAAS. Residues 139–159 traverse the membrane as a helical segment; sequence YVALGWQVGVLGAALLTPLLL. A topological domain (periplasmic) is located at residue proline 160. Residues 161–181 form a helical membrane-spanning segment; it reads HIGWRGMFLVGIFPAFVAWFL. Over 182-224 the chain is Cytoplasmic; it reads RSHLHEPEIFTQKQTALSTQSSFTDKLRSFQLLIKDKATSKIS. The helical transmembrane segment at 225 to 245 threads the bilayer; that stretch reads LGIVVLTSVQNFGYYGIMIWL. Residues 246–261 are Periplasmic-facing; sequence PNFLSKQLGFSLTKSG. The helical transmembrane segment at 262 to 282 threads the bilayer; sequence LWTAVTVCGMMAGIWIFGQLA. At 283–288 the chain is on the cytoplasmic side; it reads DRIGRK. Residues 289-309 traverse the membrane as a helical segment; that stretch reads PSFLLFQLGAVISIVVYSQLT. Topologically, residues 310–312 are periplasmic; it reads DPD. Residues 313-333 form a helical membrane-spanning segment; it reads IMLLAGAFLGMFVNGMLGGYG. The Cytoplasmic segment spans residues 334 to 357; sequence ALMAEAYPTEARATAQNVLFNIGR. Helical transmembrane passes span 358–378 and 379–399; these read AVGG…SFQT and AIAL…FLIP. At 400–407 the chain is on the cytoplasmic side; the sequence is ELKGKALD.

The protein belongs to the major facilitator superfamily. Aromatic acid:H(+) symporter (AAHS) (TC 2.A.1.15) family.

The protein resides in the cell inner membrane. The sequence is that of Putative metabolite transport protein HI_1104 from Haemophilus influenzae (strain ATCC 51907 / DSM 11121 / KW20 / Rd).